The following is a 383-amino-acid chain: S-adenosylmethionine synthase (383 aa).

ATP is bound at residue histidine 15. Aspartate 17 lines the Mg(2+) pocket. Glutamate 43 is a K(+) binding site. Positions 56 and 99 each coordinate L-methionine. The segment at glutamine 99–arginine 109 is flexible loop. Residues aspartate 164–lysine 166, arginine 230–phenylalanine 231, aspartate 239, arginine 245–lysine 246, alanine 262, and lysine 266 each bind ATP. Aspartate 239 serves as a coordination point for L-methionine. Lysine 270 contacts L-methionine.

This sequence belongs to the AdoMet synthase family. Homotetramer; dimer of dimers. It depends on Mg(2+) as a cofactor. Requires K(+) as cofactor.

The protein localises to the cytoplasm. It catalyses the reaction L-methionine + ATP + H2O = S-adenosyl-L-methionine + phosphate + diphosphate. It functions in the pathway amino-acid biosynthesis; S-adenosyl-L-methionine biosynthesis; S-adenosyl-L-methionine from L-methionine: step 1/1. Functionally, catalyzes the formation of S-adenosylmethionine (AdoMet) from methionine and ATP. The overall synthetic reaction is composed of two sequential steps, AdoMet formation and the subsequent tripolyphosphate hydrolysis which occurs prior to release of AdoMet from the enzyme. The polypeptide is S-adenosylmethionine synthase (Shewanella putrefaciens (strain CN-32 / ATCC BAA-453)).